We begin with the raw amino-acid sequence, 193 residues long: uncharacterized protein (193 aa).

Residues 86–181 (TKQRELLEIL…QVEEVQAEVG (96 aa)) adopt a coiled-coil conformation.

This is an uncharacterized protein from Streptococcus pyogenes serotype M6 (strain ATCC BAA-946 / MGAS10394).